The following is a 504-amino-acid chain: Cytochrome P450 3A16 (504 aa).

A heme-binding site is contributed by Cys-443.

Belongs to the cytochrome P450 family. Heme serves as cofactor.

Its subcellular location is the endoplasmic reticulum membrane. It is found in the microsome membrane. The enzyme catalyses an organic molecule + reduced [NADPH--hemoprotein reductase] + O2 = an alcohol + oxidized [NADPH--hemoprotein reductase] + H2O + H(+). Functionally, cytochromes P450 are a group of heme-thiolate monooxygenases. In liver microsomes, this enzyme is involved in an NADPH-dependent electron transport pathway. It oxidizes a variety of structurally unrelated compounds, including steroids, fatty acids, and xenobiotics. This chain is Cytochrome P450 3A16 (Cyp3a16), found in Mus musculus (Mouse).